The primary structure comprises 471 residues: Anthocyanidin 3-O-glucosyltransferase (471 aa).

His-24 (proton acceptor) is an active-site residue. His-24 contacts an anthocyanidin. The active-site Charge relay is Asp-130. Thr-152 lines the UDP-alpha-D-glucose pocket. His-161 is a binding site for an anthocyanidin. Positions 352, 354, 369, 372, 374, and 377 each coordinate UDP-alpha-D-glucose. Residue Gly-392 participates in an anthocyanidin binding. Residues Asp-393 and Gln-394 each contribute to the UDP-alpha-D-glucose site.

The protein belongs to the UDP-glycosyltransferase family.

The enzyme catalyses an anthocyanidin + UDP-alpha-D-glucose + H(+) = an anthocyanidin 3-O-beta-D-glucoside + UDP. Its pathway is pigment biosynthesis; anthocyanin biosynthesis. Functionally, in the presence of other necessary color factors, this glycosylation reaction allows the accumulation of anthocyanin pigments. In Zea mays (Maize), this protein is Anthocyanidin 3-O-glucosyltransferase (BZ1).